A 360-amino-acid chain; its full sequence is Josephin-like protein (360 aa).

Positions 5–192 (ESKIYHERQR…NQLPLASNYR (188 aa)) constitute a Josephin domain. The active-site Nucleophile is the cysteine 18. Histidine 129 functions as the Proton acceptor in the catalytic mechanism.

The catalysed reaction is Thiol-dependent hydrolysis of ester, thioester, amide, peptide and isopeptide bonds formed by the C-terminal Gly of ubiquitin (a 76-residue protein attached to proteins as an intracellular targeting signal).. In terms of biological role, may act as a deubiquitinating enzyme. The sequence is that of Josephin-like protein from Arabidopsis thaliana (Mouse-ear cress).